The sequence spans 745 residues: Phosphoribosylformylglycinamidine synthase subunit PurL (745 aa).

The active site involves histidine 41. Residues tyrosine 44 and lysine 83 each coordinate ATP. Glutamate 85 contributes to the Mg(2+) binding site. Residues 86–89 (SHNH) and arginine 108 contribute to the substrate site. Catalysis depends on histidine 87, which acts as the Proton acceptor. Aspartate 109 contacts Mg(2+). Glutamine 232 serves as a coordination point for substrate. Aspartate 260 is a Mg(2+) binding site. 304 to 306 (ESQ) lines the substrate pocket. Residues aspartate 494 and glycine 531 each contribute to the ATP site. A Mg(2+)-binding site is contributed by asparagine 532. A substrate-binding site is contributed by serine 534.

Belongs to the FGAMS family. As to quaternary structure, monomer. Part of the FGAM synthase complex composed of 1 PurL, 1 PurQ and 2 PurS subunits.

The protein localises to the cytoplasm. The enzyme catalyses N(2)-formyl-N(1)-(5-phospho-beta-D-ribosyl)glycinamide + L-glutamine + ATP + H2O = 2-formamido-N(1)-(5-O-phospho-beta-D-ribosyl)acetamidine + L-glutamate + ADP + phosphate + H(+). Its pathway is purine metabolism; IMP biosynthesis via de novo pathway; 5-amino-1-(5-phospho-D-ribosyl)imidazole from N(2)-formyl-N(1)-(5-phospho-D-ribosyl)glycinamide: step 1/2. In terms of biological role, part of the phosphoribosylformylglycinamidine synthase complex involved in the purines biosynthetic pathway. Catalyzes the ATP-dependent conversion of formylglycinamide ribonucleotide (FGAR) and glutamine to yield formylglycinamidine ribonucleotide (FGAM) and glutamate. The FGAM synthase complex is composed of three subunits. PurQ produces an ammonia molecule by converting glutamine to glutamate. PurL transfers the ammonia molecule to FGAR to form FGAM in an ATP-dependent manner. PurS interacts with PurQ and PurL and is thought to assist in the transfer of the ammonia molecule from PurQ to PurL. The protein is Phosphoribosylformylglycinamidine synthase subunit PurL of Aquifex aeolicus (strain VF5).